A 298-amino-acid chain; its full sequence is UDP-3-O-acyl-N-acetylglucosamine deacetylase (298 aa).

Zn(2+)-binding residues include His75, His232, and Asp236. The active-site Proton donor is His259.

The protein belongs to the LpxC family. Zn(2+) is required as a cofactor.

The catalysed reaction is a UDP-3-O-[(3R)-3-hydroxyacyl]-N-acetyl-alpha-D-glucosamine + H2O = a UDP-3-O-[(3R)-3-hydroxyacyl]-alpha-D-glucosamine + acetate. Its pathway is glycolipid biosynthesis; lipid IV(A) biosynthesis; lipid IV(A) from (3R)-3-hydroxytetradecanoyl-[acyl-carrier-protein] and UDP-N-acetyl-alpha-D-glucosamine: step 2/6. Functionally, catalyzes the hydrolysis of UDP-3-O-myristoyl-N-acetylglucosamine to form UDP-3-O-myristoylglucosamine and acetate, the committed step in lipid A biosynthesis. The chain is UDP-3-O-acyl-N-acetylglucosamine deacetylase from Wolinella succinogenes (strain ATCC 29543 / DSM 1740 / CCUG 13145 / JCM 31913 / LMG 7466 / NCTC 11488 / FDC 602W) (Vibrio succinogenes).